Here is a 200-residue protein sequence, read N- to C-terminus: MSQVKQIQGKALPLVGDDIDTDRIIPARFLRCVTFDGLGEHVFADDRQQQGGNHPFDLSQYQDATVLVVNRNFGCGSSREHAPQAIIKWGIKAIIGESFAEIFLGNCLANGVPCVTAPHGQIADLQQAITADPNLAVNLDLTTAAVTYGDRSFPVILSDGAQQMLLDGQWDTCGQLVQNQGKIAATAEKLPYLHWQTSAA.

Belongs to the LeuD family. LeuD type 1 subfamily. In terms of assembly, heterodimer of LeuC and LeuD.

The catalysed reaction is (2R,3S)-3-isopropylmalate = (2S)-2-isopropylmalate. Its pathway is amino-acid biosynthesis; L-leucine biosynthesis; L-leucine from 3-methyl-2-oxobutanoate: step 2/4. Its function is as follows. Catalyzes the isomerization between 2-isopropylmalate and 3-isopropylmalate, via the formation of 2-isopropylmaleate. This chain is 3-isopropylmalate dehydratase small subunit (leuD), found in Synechocystis sp. (strain ATCC 27184 / PCC 6803 / Kazusa).